The primary structure comprises 207 residues: Putative 3-methyladenine DNA glycosylase (207 aa).

The span at 182–193 (PAPAGARAARAP) shows a compositional bias: low complexity. The segment at 182–207 (PAPAGARAARAPAPAPRPRRPRGSGP) is disordered. Positions 198–207 (RPRRPRGSGP) are enriched in basic residues.

The protein belongs to the DNA glycosylase MPG family.

The protein is Putative 3-methyladenine DNA glycosylase of Anaeromyxobacter dehalogenans (strain 2CP-C).